The following is a 416-amino-acid chain: Serine hydroxymethyltransferase (416 aa).

(6S)-5,6,7,8-tetrahydrofolate is bound by residues Leu-121 and 125–127; that span reads GHL. Residue Lys-229 is modified to N6-(pyridoxal phosphate)lysine.

This sequence belongs to the SHMT family. In terms of assembly, homodimer. Pyridoxal 5'-phosphate is required as a cofactor.

The protein resides in the cytoplasm. It carries out the reaction (6R)-5,10-methylene-5,6,7,8-tetrahydrofolate + glycine + H2O = (6S)-5,6,7,8-tetrahydrofolate + L-serine. It functions in the pathway one-carbon metabolism; tetrahydrofolate interconversion. The protein operates within amino-acid biosynthesis; glycine biosynthesis; glycine from L-serine: step 1/1. Functionally, catalyzes the reversible interconversion of serine and glycine with tetrahydrofolate (THF) serving as the one-carbon carrier. This reaction serves as the major source of one-carbon groups required for the biosynthesis of purines, thymidylate, methionine, and other important biomolecules. Also exhibits THF-independent aldolase activity toward beta-hydroxyamino acids, producing glycine and aldehydes, via a retro-aldol mechanism. The sequence is that of Serine hydroxymethyltransferase from Aromatoleum aromaticum (strain DSM 19018 / LMG 30748 / EbN1) (Azoarcus sp. (strain EbN1)).